The following is a 165-amino-acid chain: Large ribosomal subunit protein uL10 (165 aa).

Residues K37 and K105 each carry the N6-acetyllysine modification.

Belongs to the universal ribosomal protein uL10 family. In terms of assembly, part of the ribosomal stalk of the 50S ribosomal subunit. The N-terminus interacts with L11 and the large rRNA to form the base of the stalk. The C-terminus forms an elongated spine to which L12 dimers bind in a sequential fashion forming a multimeric L10(L12)X complex.

Its function is as follows. Protein L10 is also a translational repressor protein. It controls the translation of the rplJL-rpoBC operon by binding to its mRNA. In terms of biological role, forms part of the ribosomal stalk, playing a central role in the interaction of the ribosome with GTP-bound translation factors. The chain is Large ribosomal subunit protein uL10 (rplJ) from Escherichia coli O6:H1 (strain CFT073 / ATCC 700928 / UPEC).